Consider the following 133-residue polypeptide: Ribonuclease P protein component (133 aa).

Belongs to the RnpA family. As to quaternary structure, consists of a catalytic RNA component (M1 or rnpB) and a protein subunit.

The enzyme catalyses Endonucleolytic cleavage of RNA, removing 5'-extranucleotides from tRNA precursor.. RNaseP catalyzes the removal of the 5'-leader sequence from pre-tRNA to produce the mature 5'-terminus. It can also cleave other RNA substrates such as 4.5S RNA. The protein component plays an auxiliary but essential role in vivo by binding to the 5'-leader sequence and broadening the substrate specificity of the ribozyme. This Corynebacterium glutamicum (strain R) protein is Ribonuclease P protein component.